We begin with the raw amino-acid sequence, 202 residues long: LexA repressor (202 aa).

A DNA-binding region (H-T-H motif) is located at residues 32-52 (RAEVCSAFGFKSPNAAETHLR). Active-site for autocatalytic cleavage activity residues include Ser121 and Lys158.

This sequence belongs to the peptidase S24 family. In terms of assembly, homodimer.

The catalysed reaction is Hydrolysis of Ala-|-Gly bond in repressor LexA.. Functionally, represses a number of genes involved in the response to DNA damage (SOS response), including recA and lexA. In the presence of single-stranded DNA, RecA interacts with LexA causing an autocatalytic cleavage which disrupts the DNA-binding part of LexA, leading to derepression of the SOS regulon and eventually DNA repair. This chain is LexA repressor, found in Azoarcus sp. (strain BH72).